A 671-amino-acid chain; its full sequence is Probable potassium transport system protein Kup (671 aa).

The interval 1–43 (MSQIPSPNDPASTGAAPSSAAVPAGPSATPAPSPTAGFSLPGH) is disordered. Low complexity predominate over residues 10–37 (PASTGAAPSSAAVPAGPSATPAPSPTAG). A run of 12 helical transmembrane segments spans residues 52–72 (LAAL…TSPL), 92–112 (VLGV…FKYM), 147–167 (LMLG…TPAI), 181–201 (PAME…LFLF), 209–229 (VGAV…VLGV), 255–275 (GWHG…GEAL), 291–311 (WLGL…ALLL), 323–343 (LLAP…AAIV), 381–401 (IYLP…VLGF), 407–427 (LASA…LLFH), 441–461 (AWPL…ANVV), and 465–485 (DGGW…STWK).

Belongs to the HAK/KUP transporter (TC 2.A.72) family.

The protein resides in the cell inner membrane. The catalysed reaction is K(+)(in) + H(+)(in) = K(+)(out) + H(+)(out). Its function is as follows. Transport of potassium into the cell. Likely operates as a K(+):H(+) symporter. The polypeptide is Probable potassium transport system protein Kup (Anaeromyxobacter dehalogenans (strain 2CP-1 / ATCC BAA-258)).